A 75-amino-acid polypeptide reads, in one-letter code: Large ribosomal subunit protein uL29 (75 aa).

This sequence belongs to the universal ribosomal protein uL29 family.

This chain is Large ribosomal subunit protein uL29, found in Ureaplasma urealyticum serovar 10 (strain ATCC 33699 / Western).